The primary structure comprises 506 residues: ATP synthase subunit alpha (506 aa).

171–178 (GDRQTGKT) is a binding site for ATP.

Belongs to the ATPase alpha/beta chains family. F-type ATPases have 2 components, CF(1) - the catalytic core - and CF(0) - the membrane proton channel. CF(1) has five subunits: alpha(3), beta(3), gamma(1), delta(1), epsilon(1). CF(0) has four main subunits: a, b, b' and c.

It localises to the cellular thylakoid membrane. It catalyses the reaction ATP + H2O + 4 H(+)(in) = ADP + phosphate + 5 H(+)(out). Its function is as follows. Produces ATP from ADP in the presence of a proton gradient across the membrane. The alpha chain is a regulatory subunit. This is ATP synthase subunit alpha from Nostoc punctiforme (strain ATCC 29133 / PCC 73102).